The primary structure comprises 287 residues: Inorganic pyrophosphatase (287 aa).

Residue Arg-80 coordinates diphosphate. Asp-117, Asp-122, and Asp-154 together coordinate Mg(2+).

This sequence belongs to the PPase family. It depends on Mg(2+) as a cofactor.

It localises to the cytoplasm. It carries out the reaction diphosphate + H2O = 2 phosphate + H(+). This chain is Inorganic pyrophosphatase (IPP1), found in Yarrowia lipolytica (strain CLIB 122 / E 150) (Yeast).